A 116-amino-acid polypeptide reads, in one-letter code: MNKDSTQTWGLKRDITPCFGARLVQEGHRLHFLADRAGFTGSFSEVQTLQLDEAFPHFVAHLELMLLSCELNPRYAHCVTLYRNGLTGEADTLGSHGYVYIAILNRHGFNRHLRVI.

This sequence belongs to the CbeA/YafW/YfjZ antitoxin family.

Its function is as follows. Putative antitoxin component of a type IV toxin-antitoxin (TA) system; its cognate toxin is unknown. This is Orphan antitoxin YagB (yagB) from Escherichia coli (strain K12).